Consider the following 472-residue polypeptide: 3-isopropylmalate dehydratase large subunit (472 aa).

[4Fe-4S] cluster is bound by residues Cys-352, Cys-413, and Cys-416.

Belongs to the aconitase/IPM isomerase family. LeuC type 1 subfamily. In terms of assembly, heterodimer of LeuC and LeuD. It depends on [4Fe-4S] cluster as a cofactor.

It carries out the reaction (2R,3S)-3-isopropylmalate = (2S)-2-isopropylmalate. Its pathway is amino-acid biosynthesis; L-leucine biosynthesis; L-leucine from 3-methyl-2-oxobutanoate: step 2/4. Its function is as follows. Catalyzes the isomerization between 2-isopropylmalate and 3-isopropylmalate, via the formation of 2-isopropylmaleate. The polypeptide is 3-isopropylmalate dehydratase large subunit (Pseudomonas fluorescens (strain ATCC BAA-477 / NRRL B-23932 / Pf-5)).